Reading from the N-terminus, the 460-residue chain is Probable Xaa-Pro aminopeptidase VDBG_02538 (460 aa).

Mn(2+) contacts are provided by Asp-256, Asp-267, Glu-390, and Glu-430.

This sequence belongs to the peptidase M24B family. The cofactor is Mn(2+).

The catalysed reaction is Release of any N-terminal amino acid, including proline, that is linked to proline, even from a dipeptide or tripeptide.. Its function is as follows. Catalyzes the removal of a penultimate prolyl residue from the N-termini of peptides. In Verticillium alfalfae (strain VaMs.102 / ATCC MYA-4576 / FGSC 10136) (Verticillium wilt of alfalfa), this protein is Probable Xaa-Pro aminopeptidase VDBG_02538.